We begin with the raw amino-acid sequence, 93 residues long: Integration host factor subunit beta (93 aa).

This sequence belongs to the bacterial histone-like protein family. Heterodimer of an alpha and a beta chain.

Functionally, this protein is one of the two subunits of integration host factor, a specific DNA-binding protein that functions in genetic recombination as well as in transcriptional and translational control. The protein is Integration host factor subunit beta of Aliivibrio fischeri (strain ATCC 700601 / ES114) (Vibrio fischeri).